Reading from the N-terminus, the 469-residue chain is RNA-editing ligase 1, mitochondrial (469 aa).

Residues 1-44 (MQLQRLGAPLLKRLVGGCIRQSTAPIMPCVVVSGSGGFLTPVRT) constitute a mitochondrion transit peptide. ATP-binding positions include 59 to 61 (IEI), 86 to 92 (EKVHGTN), Asn-92, Arg-111, Glu-159, Phe-209, and 307 to 309 (KLR). Residue Lys-87 is the N6-AMP-lysine intermediate of the active site. The tract at residues 450–469 (AAAQSEAIPPLSPAAPTKGE) is disordered.

It belongs to the RNA ligase 2 family. In terms of assembly, component of the RNA editing complex (editosome), a 1600 kDa complex composed of at least 20 proteins. Interacts with terminal uridylyltransferase MEAT1.

It is found in the mitochondrion. The enzyme catalyses ATP + (ribonucleotide)n-3'-hydroxyl + 5'-phospho-(ribonucleotide)m = (ribonucleotide)n+m + AMP + diphosphate.. Functionally, essential for RNA editing. RNA editing in kinetoplastid mitochondria inserts and deletes uridylates at multiple sites in pre-mRNAs as directed by guide RNAs. This chain is RNA-editing ligase 1, mitochondrial (REL1), found in Trypanosoma brucei brucei (strain 927/4 GUTat10.1).